Consider the following 355-residue polypeptide: Probable dual-specificity RNA methyltransferase RlmN 1 (355 aa).

Glutamate 91 serves as the catalytic Proton acceptor. In terms of domain architecture, Radical SAM core spans 99–336 (RADRAAGCLS…THLRRSRGPD (238 aa)). Cysteine 106 and cysteine 341 form a disulfide bridge. 3 residues coordinate [4Fe-4S] cluster: cysteine 113, cysteine 117, and cysteine 120. Residues 163 to 164 (GE), serine 195, 218 to 220 (SLH), and asparagine 294 contribute to the S-adenosyl-L-methionine site. The active-site S-methylcysteine intermediate is the cysteine 341.

Belongs to the radical SAM superfamily. RlmN family. The cofactor is [4Fe-4S] cluster.

The protein resides in the cytoplasm. It catalyses the reaction adenosine(2503) in 23S rRNA + 2 reduced [2Fe-2S]-[ferredoxin] + 2 S-adenosyl-L-methionine = 2-methyladenosine(2503) in 23S rRNA + 5'-deoxyadenosine + L-methionine + 2 oxidized [2Fe-2S]-[ferredoxin] + S-adenosyl-L-homocysteine. It carries out the reaction adenosine(37) in tRNA + 2 reduced [2Fe-2S]-[ferredoxin] + 2 S-adenosyl-L-methionine = 2-methyladenosine(37) in tRNA + 5'-deoxyadenosine + L-methionine + 2 oxidized [2Fe-2S]-[ferredoxin] + S-adenosyl-L-homocysteine. Its function is as follows. Specifically methylates position 2 of adenine 2503 in 23S rRNA and position 2 of adenine 37 in tRNAs. This Opitutus terrae (strain DSM 11246 / JCM 15787 / PB90-1) protein is Probable dual-specificity RNA methyltransferase RlmN 1.